A 253-amino-acid chain; its full sequence is Small ribosomal subunit protein uS3 (253 aa).

A KH type-2 domain is found at 39–107 (VRRALKKRLY…EVHLNIVEIR (69 aa)). The segment at 215–253 (LDKRLAGESGPAGEGGGRERGDRPDRGPRRERRGEPSNA) is disordered. A compositionally biased stretch (basic and acidic residues) spans 230 to 253 (GGRERGDRPDRGPRRERRGEPSNA).

The protein belongs to the universal ribosomal protein uS3 family. In terms of assembly, part of the 30S ribosomal subunit. Forms a tight complex with proteins S10 and S14.

Functionally, binds the lower part of the 30S subunit head. Binds mRNA in the 70S ribosome, positioning it for translation. The sequence is that of Small ribosomal subunit protein uS3 from Phenylobacterium zucineum (strain HLK1).